The following is an 823-amino-acid chain: ATP-dependent DNA helicase At3g02060, chloroplastic (823 aa).

The transit peptide at 1–53 (MMSLLPNPDPITVPLVLKLCSFPPPRRLFSLRLRRFTRKSSSLLPLVAVSSLS) directs the protein to the chloroplast. Residues 285–447 (LTERETPMDR…LTGFRDASLI (163 aa)) enclose the Helicase ATP-binding domain. Residue 298–305 (GDVGFGKT) coordinates ATP. Positions 400–403 (DEEQ) match the DEEQ box motif. Residues 465 to 622 (RKEKVIEAIK…GFQLAEKDMG (158 aa)) enclose the Helicase C-terminal domain.

Belongs to the helicase family.

The protein localises to the plastid. The protein resides in the chloroplast. It catalyses the reaction ATP + H2O = ADP + phosphate + H(+). The polypeptide is ATP-dependent DNA helicase At3g02060, chloroplastic (Arabidopsis thaliana (Mouse-ear cress)).